The chain runs to 440 residues: Thymidine phosphorylase (440 aa).

The protein belongs to the thymidine/pyrimidine-nucleoside phosphorylase family. In terms of assembly, homodimer.

It carries out the reaction thymidine + phosphate = 2-deoxy-alpha-D-ribose 1-phosphate + thymine. It functions in the pathway pyrimidine metabolism; dTMP biosynthesis via salvage pathway; dTMP from thymine: step 1/2. In terms of biological role, the enzymes which catalyze the reversible phosphorolysis of pyrimidine nucleosides are involved in the degradation of these compounds and in their utilization as carbon and energy sources, or in the rescue of pyrimidine bases for nucleotide synthesis. The chain is Thymidine phosphorylase from Shigella boydii serotype 4 (strain Sb227).